A 1025-amino-acid polypeptide reads, in one-letter code: Adenylate-forming reductase 03009 (1025 aa).

The interval 38–422 is adenylation (A) domain; the sequence is FEFHAKSNPQ…LGRIDNQVKI (385 aa). AMP is bound by residues 332 to 333 and 412 to 415; these read VT and HLGR. Residues 556–638 form a thiolation and peptide carrier (T) domain region; it reads SLGSTNTKIS…AILIWICVKK (83 aa). The segment at 682–900 is thioester reductase (TR) domain; it reads FIRRTAARVY…PPTKLWVKGV (219 aa). Residues 685 to 688, 769 to 771, and Tyr-840 each bind NADP(+); these read RTAA and SAL.

The protein belongs to the adenylate-forming reductase family.

Its function is as follows. Adenylate-forming reductase, a natural product biosynthesis enzyme that resembles non-ribosomal peptide synthetases, yet serves to modify one substrate, rather than to condense two or more building blocks. The A-domain preferentially accepts L-serine, L-alanine and L-valine as substrates. The natural product of the enzyme is not yet known. The sequence is that of Adenylate-forming reductase 03009 from Coprinopsis cinerea (strain Okayama-7 / 130 / ATCC MYA-4618 / FGSC 9003) (Inky cap fungus).